The primary structure comprises 421 residues: ATP-dependent RNA helicase RhlB (421 aa).

The Q motif signature appears at Gln-9–Ala-37. In terms of domain architecture, Helicase ATP-binding spans Leu-40–Ile-219. Ala-53–Thr-60 provides a ligand contact to ATP. The short motif at Asp-165–Asp-168 is the DEAD box element. The Helicase C-terminal domain occupies Arg-245 to Met-390. The tract at residues Lys-395–Gly-421 is disordered. Low complexity predominate over residues Ala-402–Pro-414.

Belongs to the DEAD box helicase family. RhlB subfamily. Component of the RNA degradosome, which is a multiprotein complex involved in RNA processing and mRNA degradation.

The protein localises to the cytoplasm. The enzyme catalyses ATP + H2O = ADP + phosphate + H(+). Its function is as follows. DEAD-box RNA helicase involved in RNA degradation. Has RNA-dependent ATPase activity and unwinds double-stranded RNA. This is ATP-dependent RNA helicase RhlB from Shigella flexneri serotype 5b (strain 8401).